A 393-amino-acid polypeptide reads, in one-letter code: NAD(P)H-quinone oxidoreductase subunit H 1 (393 aa).

Belongs to the complex I 49 kDa subunit family. NDH-1 can be composed of about 15 different subunits; different subcomplexes with different compositions have been identified which probably have different functions.

It is found in the cell inner membrane. The catalysed reaction is a plastoquinone + NADH + (n+1) H(+)(in) = a plastoquinol + NAD(+) + n H(+)(out). It carries out the reaction a plastoquinone + NADPH + (n+1) H(+)(in) = a plastoquinol + NADP(+) + n H(+)(out). In terms of biological role, NDH-1 shuttles electrons from an unknown electron donor, via FMN and iron-sulfur (Fe-S) centers, to quinones in the respiratory and/or the photosynthetic chain. The immediate electron acceptor for the enzyme in this species is believed to be plastoquinone. Couples the redox reaction to proton translocation, and thus conserves the redox energy in a proton gradient. Cyanobacterial NDH-1 also plays a role in inorganic carbon-concentration. This is NAD(P)H-quinone oxidoreductase subunit H 1 from Gloeobacter violaceus (strain ATCC 29082 / PCC 7421).